The chain runs to 1019 residues: Enteropeptidase (1019 aa).

Glycine 2 carries N-myristoyl glycine lipidation. The Cytoplasmic segment spans residues 2 to 18 (GSKRGISSRHHSLSSYE). A helical; Signal-anchor for type II membrane protein transmembrane segment spans residues 19–47 (IMFAALFAILVVLCAGLIAVSCLTIKESQ). The Extracellular portion of the chain corresponds to 48–1019 (RGAALGQSHE…FTEWIQSFLH (972 aa)). Residues 54-169 (QSHEARATFK…NSVDILDKLT (116 aa)) enclose the SEA domain. N-linked (GlcNAc...) asparagine glycosylation is found at asparagine 116, asparagine 147, and asparagine 179. The LDL-receptor class A 1 domain maps to 182-223 (IECLPGSSPCTDALTCIKADLFCDGEVNCPDGSDEDNKMCAT). Disulfide bonds link cysteine 184–cysteine 197, cysteine 191–cysteine 210, cysteine 204–cysteine 221, and cysteine 225–cysteine 253. The CUB 1 domain occupies 225 to 334 (CDGRFLLTGS…VGFNATYTAF (110 aa)). Residues asparagine 328, asparagine 335, asparagine 388, asparagine 440, asparagine 470, asparagine 503, asparagine 534, and asparagine 630 are each glycosylated (N-linked (GlcNAc...) asparagine). An MAM domain is found at 342–504 (YEKINCNFED…ISLTYGICNG (163 aa)). An intrachain disulfide couples cysteine 524 to cysteine 552. The CUB 2 domain occupies 524–634 (CGGPFELWEP…GGFKANFTTG (111 aa)). Residues 641-679 (EPCKADHFQCKNGECVPLVNLCDGHLHCEDGSDEADCVR) enclose the LDL-receptor class A 2 domain. 3 disulfides stabilise this stretch: cysteine 643-cysteine 655, cysteine 650-cysteine 668, and cysteine 662-cysteine 677. The region spanning 678–771 (VRFFNGTTNN…LIRLQCNHKS (94 aa)) is the SRCR domain. Residues asparagine 682, asparagine 706, and asparagine 725 are each glycosylated (N-linked (GlcNAc...) asparagine). 3 cysteine pairs are disulfide-bonded: cysteine 757–cysteine 767, cysteine 772–cysteine 896, and cysteine 810–cysteine 826. The Peptidase S1 domain occupies 785 to 1019 (IVGGSNAKEG…FTEWIQSFLH (235 aa)). Histidine 825 (charge relay system) is an active-site residue. N-linked (GlcNAc...) asparagine glycosylation is present at asparagine 848. The active-site Charge relay system is the aspartate 876. Asparagine 887, asparagine 909, and asparagine 949 each carry an N-linked (GlcNAc...) asparagine glycan. 3 disulfide bridges follow: cysteine 910-cysteine 977, cysteine 941-cysteine 956, and cysteine 967-cysteine 995. Residue serine 971 is the Charge relay system of the active site.

It belongs to the peptidase S1 family. Heterodimer of a catalytic (light) chain and a multidomain (heavy) chain linked by a disulfide bond. The chains are derived from a single precursor that is cleaved by a trypsin-like protease. As to expression, intestinal brush border.

Its subcellular location is the membrane. It catalyses the reaction Activation of trypsinogen by selective cleavage of 6-Lys-|-Ile-7 bond.. Functionally, responsible for initiating activation of pancreatic proteolytic proenzymes (trypsin, chymotrypsin and carboxypeptidase A). It catalyzes the conversion of trypsinogen to trypsin which in turn activates other proenzymes including chymotrypsinogen, procarboxypeptidases, and proelastases. The protein is Enteropeptidase (TMPRSS15) of Homo sapiens (Human).